Reading from the N-terminus, the 354-residue chain is tRNA N6-adenosine threonylcarbamoyltransferase (354 aa).

Fe cation is bound by residues His-116 and His-120. Substrate-binding positions include 139–143 (LVSGG), Asp-172, Gly-185, and Asn-281. Asp-309 contacts Fe cation.

Belongs to the KAE1 / TsaD family. Requires Fe(2+) as cofactor.

It localises to the cytoplasm. The catalysed reaction is L-threonylcarbamoyladenylate + adenosine(37) in tRNA = N(6)-L-threonylcarbamoyladenosine(37) in tRNA + AMP + H(+). In terms of biological role, required for the formation of a threonylcarbamoyl group on adenosine at position 37 (t(6)A37) in tRNAs that read codons beginning with adenine. Is involved in the transfer of the threonylcarbamoyl moiety of threonylcarbamoyl-AMP (TC-AMP) to the N6 group of A37, together with TsaE and TsaB. TsaD likely plays a direct catalytic role in this reaction. The sequence is that of tRNA N6-adenosine threonylcarbamoyltransferase from Parasynechococcus marenigrum (strain WH8102).